The following is a 339-amino-acid chain: ATP-dependent 6-phosphofructokinase (339 aa).

Residues glycine 11, 72–73 (RY), and 102–105 (GDGS) contribute to the ATP site. Residue aspartate 103 coordinates Mg(2+). Substrate is bound by residues 125–127 (TID), arginine 162, and 169–171 (MGR). Aspartate 127 (proton acceptor) is an active-site residue. ADP contacts are provided by residues 185–187 (GAD) and 214–216 (KSH). Substrate contacts are provided by residues glutamate 223, arginine 245, and 251–254 (HVIR).

The protein belongs to the phosphofructokinase type A (PFKA) family. ATP-dependent PFK group I subfamily. Prokaryotic clade 'B1' sub-subfamily. As to quaternary structure, homotetramer. The cofactor is Mg(2+).

The protein localises to the cytoplasm. The catalysed reaction is beta-D-fructose 6-phosphate + ATP = beta-D-fructose 1,6-bisphosphate + ADP + H(+). Its pathway is carbohydrate degradation; glycolysis; D-glyceraldehyde 3-phosphate and glycerone phosphate from D-glucose: step 3/4. Allosterically activated by ADP and other diphosphonucleosides, and allosterically inhibited by phosphoenolpyruvate. Catalyzes the phosphorylation of D-fructose 6-phosphate to fructose 1,6-bisphosphate by ATP, the first committing step of glycolysis. This chain is ATP-dependent 6-phosphofructokinase, found in Streptococcus thermophilus (strain ATCC BAA-491 / LMD-9).